The chain runs to 165 residues: Phosphopantetheine adenylyltransferase (165 aa).

S10 is a substrate binding site. Residues 10–11 and H18 contribute to the ATP site; that span reads SF. Positions 42, 79, and 93 each coordinate substrate. Residues 94 to 96, E104, and 129 to 135 each bind ATP; these read GLR and VRPITAT.

Belongs to the bacterial CoaD family. As to quaternary structure, homohexamer. Mg(2+) serves as cofactor.

The protein localises to the cytoplasm. It catalyses the reaction (R)-4'-phosphopantetheine + ATP + H(+) = 3'-dephospho-CoA + diphosphate. It participates in cofactor biosynthesis; coenzyme A biosynthesis; CoA from (R)-pantothenate: step 4/5. In terms of biological role, reversibly transfers an adenylyl group from ATP to 4'-phosphopantetheine, yielding dephospho-CoA (dPCoA) and pyrophosphate. The protein is Phosphopantetheine adenylyltransferase of Rhodopseudomonas palustris (strain HaA2).